Consider the following 554-residue polypeptide: Glucose-6-phosphate isomerase (554 aa).

E359 (proton donor) is an active-site residue. Active-site residues include H390 and K518.

This sequence belongs to the GPI family.

The protein resides in the cytoplasm. The enzyme catalyses alpha-D-glucose 6-phosphate = beta-D-fructose 6-phosphate. Its pathway is carbohydrate biosynthesis; gluconeogenesis. It participates in carbohydrate degradation; glycolysis; D-glyceraldehyde 3-phosphate and glycerone phosphate from D-glucose: step 2/4. Catalyzes the reversible isomerization of glucose-6-phosphate to fructose-6-phosphate. The sequence is that of Glucose-6-phosphate isomerase from Pseudomonas syringae pv. syringae (strain B728a).